A 444-amino-acid polypeptide reads, in one-letter code: Acyl-CoA (8-3)-desaturase (444 aa).

Residue Met1 is modified to N-acetylmethionine. Over 1–121 (MAPDPVAAKT…FRELRATVEQ (121 aa)) the chain is Cytoplasmic. The 78-residue stretch at 17–94 (PRYFTWDEVA…MNSLLIGELS (78 aa)) folds into the Cytochrome b5 heme-binding domain. The chain crosses the membrane as a helical span at residues 122-142 (MGLMKANHVFFLLYLLHILLL). Residues 143–146 (DGAA) are Lumenal-facing. Residues 147–167 (WLTLWIFGTSFLPFLLCAVLL) traverse the membrane as a helical segment. At 168–267 (TAAQIQAGWL…PYNHQHKYFF (100 aa)) the chain is on the cytoplasmic side. A Histidine box-1 motif is present at residues 179–183 (HDLGH). The Histidine box-2 motif lies at 216–220 (HFQHH). A helical membrane pass occupies residues 268–288 (LIGPPALVPFFFQWYVFYFVI). Residues 289 to 305 (QRKKWVDLAWMITFYIR) are Lumenal-facing. Residues 306-326 (LLLTYVPLLGLKAFLGLYFIV) form a helical membrane-spanning segment. The Cytoplasmic portion of the chain corresponds to 327–444 (RFLESNWFVW…QLWLDAYLHQ (118 aa)). The Histidine box-3 motif lies at 382 to 386 (QIEHH).

Belongs to the fatty acid desaturase type 1 family. Widely expressed. Expressed in brain, liver and thymus (at protein level). Isoform 1 seems to be more abundant than isoform 2. Expression of isoform 2 is very low in spleen and not detectable in skeletal muscle.

It is found in the endoplasmic reticulum membrane. The protein localises to the mitochondrion. It carries out the reaction (8Z,11Z,14Z)-eicosatrienoyl-CoA + 2 Fe(II)-[cytochrome b5] + O2 + 2 H(+) = (5Z,8Z,11Z,14Z)-eicosatetraenoyl-CoA + 2 Fe(III)-[cytochrome b5] + 2 H2O. It catalyses the reaction (8Z,11Z,14Z,17Z)-eicosatetraenoyl-CoA + 2 Fe(II)-[cytochrome b5] + O2 + 2 H(+) = (5Z,8Z,11Z,14Z,17Z)-eicosapentaenoyl-CoA + 2 Fe(III)-[cytochrome b5] + 2 H2O. The catalysed reaction is (11E)-octadecenoyl-CoA + 2 Fe(II)-[cytochrome b5] + O2 + 2 H(+) = (5Z,11E)-octadecadienoyl-CoA + 2 Fe(III)-[cytochrome b5] + 2 H2O. It functions in the pathway lipid metabolism; polyunsaturated fatty acid biosynthesis. Acts as a front-end fatty acyl-coenzyme A (CoA) desaturase that introduces a cis double bond at carbon 5 located between a preexisting double bond and the carboxyl end of the fatty acyl chain. Involved in biosynthesis of highly unsaturated fatty acids (HUFA) from the essential polyunsaturated fatty acids (PUFA) linoleic acid (LA) (18:2n-6) and alpha-linolenic acid (ALA) (18:3n-3) precursors. Specifically, desaturates dihomo-gamma-linoleoate (DGLA) (20:3n-6) and eicosatetraenoate (ETA) (20:4n-3) to generate arachidonate (AA) (20:4n-6) and eicosapentaenoate (EPA) (20:5n-3), respectively. As a rate limiting enzyme for DGLA (20:3n-6) and AA (20:4n-6)-derived eicosanoid biosynthesis, controls the metabolism of inflammatory lipids like prostaglandin E2, critical for efficient acute inflammatory response and maintenance of epithelium homeostasis. Contributes to membrane phospholipid biosynthesis by providing AA (20:4n-6) as a major acyl chain esterified into phospholipids. In particular, regulates phosphatidylinositol-4,5-bisphosphate levels, modulating inflammatory cytokine production in T-cells. Also desaturates (11E)-octadecenoate (trans-vaccenoate)(18:1n-9), a metabolite in the biohydrogenation pathway of LA (18:2n-6). Its function is as follows. Does not exhibit any catalytic activity toward 20:3n-6, but it may enhance FADS2 activity. The chain is Acyl-CoA (8-3)-desaturase from Papio anubis (Olive baboon).